We begin with the raw amino-acid sequence, 413 residues long: Gamma-glutamyl phosphate reductase (413 aa).

This sequence belongs to the gamma-glutamyl phosphate reductase family.

It localises to the cytoplasm. It catalyses the reaction L-glutamate 5-semialdehyde + phosphate + NADP(+) = L-glutamyl 5-phosphate + NADPH + H(+). The protein operates within amino-acid biosynthesis; L-proline biosynthesis; L-glutamate 5-semialdehyde from L-glutamate: step 2/2. Its function is as follows. Catalyzes the NADPH-dependent reduction of L-glutamate 5-phosphate into L-glutamate 5-semialdehyde and phosphate. The product spontaneously undergoes cyclization to form 1-pyrroline-5-carboxylate. The chain is Gamma-glutamyl phosphate reductase from Caulobacter vibrioides (strain ATCC 19089 / CIP 103742 / CB 15) (Caulobacter crescentus).